We begin with the raw amino-acid sequence, 1129 residues long: MVLSNVDAEEVNMDSSMELEESSQEPLRADNYEEIYNSLVHHEPDLEEAAHASYSWVVKNFSTLEDKTYSPLFKAGHTTWRIVLFPKGCNQTEYASVFLEYLPQCKVEAIRKYEAELAAGKTPTIDPEIVNDETYSCCAQFALSLSNVQDPTVMQINTSHHRFRSEVKDWGFTRFVDLRKIAVPTPEFPVPFLENDEICISVTVRVLQDPTGVLWHSFVNYNSKKETGYVGLKNQGATCYMNSLLQSLFFTNIFRKTVYKIPTDNDDSRDSVAYALQRVFYNLEKQREPVSTTELTRSFGWNSFDSFMQHDIQEFNRVLQDNLEKKMKGTEVENALNDIFVGKMKSYVKCIDVNYESSRVEDFWDIQLNVKGMDTLEDSFRDAIQVETLTGDNKYYAEGHGLQDAHKGIIFESLPNVLQLQLKRFDYDMLRDMMVKINDRHEFPLEIDLEPYLSETADKSESHVYVLHGVLVHGGDLHGGHYYALIKPEKDSNWFKFDDDRVTRATIKEVLEDNYGGEPAGRAKGYNGNPFKRFMNAYMLVYFRKSRLDHILSPVTAEDVPFHVRNTLDEEHRVVERKLLEREEQQIYRRVRVLTTDGFKKYHGFDMTDFSASDDDPVLITTKIKRNANIWDLQKHLAGLLNRDTSGIRIWLMTNRQNRTVRVDLPLDKKTILVDQICDMHIRKDMDMRVYVEFLSEHNQLLADFGATDDNDFDTYIFLKIFDYETQQISGLADLHVSKNSPISSLSEWIREHLKWSSDVPITYYEEIKTGMVDVLDPNASFEKSEIQVGDIICFEKKLVHDSSSDTSHPYKSALDLYDFMAHRVVITFEPRYSDDTNNGVFDLVLTTHTNYTDMARAVANKLNVDPNYLQFTMAHLPSRTPRSVIRNPSKFTLQNAIPSTYSHNQNVVMFYEVLDITLSELERKQLIRVHFLSNGISHETQMEFYVDKEGTVEDILRQVTQKVPLNAEDASRLRLYEVYNHRILKSHLPTDGIYDLNEFSTAYVEVTPKEEQMQLKTDDAVSIVVQHFFKDLSRLHDIPFYFVLLRGETLKDLKKRLQKRLGYNDTQFSKVKLAVLQAQSFGKPYYLTDDDEVLYGELEPQSHILGLDHPPANGSAQYHGMDQAIRMK.

Positions 1–26 (MVLSNVDAEEVNMDSSMELEESSQEP) are disordered. Positions 7–23 (DAEEVNMDSSMELEESS) are enriched in acidic residues. The MATH domain maps to 51-204 (HASYSWVVKN…NDEICISVTV (154 aa)). Residues 230–545 (VGLKNQGATC…NAYMLVYFRK (316 aa)) enclose the USP domain. Cys-239 (nucleophile) is an active-site residue. His-481 functions as the Proton acceptor in the catalytic mechanism.

The protein belongs to the peptidase C19 family.

It localises to the nucleus. It carries out the reaction Thiol-dependent hydrolysis of ester, thioester, amide, peptide and isopeptide bonds formed by the C-terminal Gly of ubiquitin (a 76-residue protein attached to proteins as an intracellular targeting signal).. Its function is as follows. Hydrolase that deubiquitinates target proteins. Cleaves the UBL propeptide in sde2. Involved in regulating the steady-state levels of proteins including prp4. The protein is Ubiquitin carboxyl-terminal hydrolase 15 of Schizosaccharomyces pombe (strain 972 / ATCC 24843) (Fission yeast).